A 205-amino-acid chain; its full sequence is Anaerobic dimethyl sulfoxide reductase chain B (205 aa).

3 consecutive 4Fe-4S ferredoxin-type domains span residues 5 to 33, 59 to 89, and 90 to 119; these read YGFFIDSSRCAGCKTCELACKDYKDLTPE, FAYYLSISCNHCEDPACTKVCPSGAMHKRED, and GFVVVDEDVCIGCRYCHMACPYGAPQYNET. 16 residues coordinate [4Fe-4S] cluster: Cys14, Cys17, Cys20, Cys24, Cys67, Cys70, Cys75, Cys79, Cys99, Cys102, Cys105, Cys109, Cys126, Cys129, Cys141, and Cys145. The tract at residues 184–205 is disordered; it reads KPNANSRPTGDTTGYLANPKEV. Residues 186 to 195 are compositionally biased toward polar residues; that stretch reads NANSRPTGDT.

As to quaternary structure, heterotrimeric enzyme composed of a catalytic heterodimer (DmsAB) and a membrane anchor protein (DmsC). The cofactor is [4Fe-4S] cluster.

Its function is as follows. Electron transfer subunit of the terminal reductase during anaerobic growth on various sulfoxide and N-oxide compounds. The sequence is that of Anaerobic dimethyl sulfoxide reductase chain B (dmsB) from Shigella flexneri.